A 259-amino-acid polypeptide reads, in one-letter code: Proteasome subunit alpha 1 (259 aa).

The segment at Leu231 to Asp259 is disordered. A compositionally biased stretch (low complexity) spans Pro233–Ala243. Basic and acidic residues predominate over residues Pro244–Asp259.

Belongs to the peptidase T1A family. As to quaternary structure, the 20S proteasome core is composed of 14 alpha and 14 beta subunits that assemble into four stacked heptameric rings, resulting in a barrel-shaped structure. The two inner rings, each composed of seven catalytic beta subunits, are sandwiched by two outer rings, each composed of seven alpha subunits. All four combinations of alpha- and beta-subunits (beta2-alpha1, beta2-alpha2, beta1-alpha2 and beta1-alpha1) yield fully assembled and proteolytically active proteasomes. The catalytic chamber with the active sites is on the inside of the barrel. Has probably a gated structure, the ends of the cylinder being occluded by the N-termini of the alpha-subunits. Is likely capped by the proteasome-associated ATPase, ARC. In terms of processing, the N-terminus is blocked.

It is found in the cytoplasm. The protein operates within protein degradation; proteasomal Pup-dependent pathway. The formation of the proteasomal ATPase ARC-20S proteasome complex, likely via the docking of the C-termini of ARC into the intersubunit pockets in the alpha-rings, may trigger opening of the gate for substrate entry. Interconversion between the open-gate and close-gate conformations leads to a dynamic regulation of the 20S proteasome proteolysis activity. Component of the proteasome core, a large protease complex with broad specificity involved in protein degradation. The R.erythropolis proteasomes are able to cleave oligopeptides after Tyr, Phe and Leu, very poorly after Arg but not after Glu. Thus, displays chymotrypsin-like activity, low trypsin-like activity but no caspase-like activity. In Rhodococcus erythropolis (Arthrobacter picolinophilus), this protein is Proteasome subunit alpha 1.